Reading from the N-terminus, the 323-residue chain is Protein translocase subunit SecF (323 aa).

Topologically, residues 1 to 22 (MAQEYTVEQLNHGRKVYDFMRW) are cytoplasmic. Residues 23–43 (DYWAFGISGLLLIAAIVIMGV) form a helical membrane-spanning segment. At 44–142 (RGFNWGLDFT…FVGPSVGADL (99 aa)) the chain is on the periplasmic side. A helical transmembrane segment spans residues 143-163 (AQTGAMALMAALLSILVYVGF). At 164 to 170 (RFEWRLA) the chain is on the cytoplasmic side. Residues 171-191 (AGVVIALAHDVIITLGILSLF) form a helical membrane-spanning segment. Over 192 to 196 (HIEID) the chain is Periplasmic. The chain crosses the membrane as a helical span at residues 197–217 (LTIVASLMSVIGYSLNDSIVV). Topologically, residues 218 to 247 (SDRIRENFRKIRRGTPYEIFNVSLTQTLHR) are cytoplasmic. Residues 248–270 (TLITSGTTLMVILMLYLFGGPVL) form a helical membrane-spanning segment. Residues 271–280 (EGFSLTMLIG) lie on the Periplasmic side of the membrane. A helical transmembrane segment spans residues 281 to 301 (VSIGTASSIYVASALALKLGM). Residues 302 to 323 (KREHMLQQKVEKEGADQPSILP) are Cytoplasmic-facing.

Belongs to the SecD/SecF family. SecF subfamily. As to quaternary structure, forms a complex with SecD. Part of the essential Sec protein translocation apparatus which comprises SecA, SecYEG and auxiliary proteins SecDF-YajC and YidC.

It is found in the cell inner membrane. Functionally, part of the Sec protein translocase complex. Interacts with the SecYEG preprotein conducting channel. SecDF uses the proton motive force (PMF) to complete protein translocation after the ATP-dependent function of SecA. This Escherichia coli O157:H7 protein is Protein translocase subunit SecF.